The following is a 459-amino-acid chain: tRNA modification GTPase MnmE (459 aa).

(6S)-5-formyl-5,6,7,8-tetrahydrofolate-binding residues include Arg-21, Glu-84, and Lys-123. The 162-residue stretch at 219–380 folds into the TrmE-type G domain; it reads GMLTVIVGQP…LEKEIKQRVY (162 aa). Asn-229 serves as a coordination point for K(+). GTP-binding positions include 229–234, 248–254, and 273–276; these read NVGKSS, TDIPGTT, and DTAG. Residue Ser-233 participates in Mg(2+) binding. 3 residues coordinate K(+): Thr-248, Ile-250, and Thr-253. Thr-254 contributes to the Mg(2+) binding site. Position 459 (Lys-459) interacts with (6S)-5-formyl-5,6,7,8-tetrahydrofolate.

It belongs to the TRAFAC class TrmE-Era-EngA-EngB-Septin-like GTPase superfamily. TrmE GTPase family. Homodimer. Heterotetramer of two MnmE and two MnmG subunits. K(+) is required as a cofactor.

The protein localises to the cytoplasm. Its function is as follows. Exhibits a very high intrinsic GTPase hydrolysis rate. Involved in the addition of a carboxymethylaminomethyl (cmnm) group at the wobble position (U34) of certain tRNAs, forming tRNA-cmnm(5)s(2)U34. The sequence is that of tRNA modification GTPase MnmE from Desulfitobacterium hafniense (strain Y51).